A 386-amino-acid polypeptide reads, in one-letter code: Sphingosine 1-phosphate receptor 4 (386 aa).

Residues 1–56 (MNISTWSTLVTPESCHRLAASGHSLLIVLHYNHSGRLASRGGSEDGGGLGMLRGPS) lie on the Extracellular side of the membrane. Asn2 and Asn32 each carry an N-linked (GlcNAc...) asparagine glycan. A helical transmembrane segment spans residues 57–77 (VAAGCLVVLENAMVLAAIAIY). The Cytoplasmic portion of the chain corresponds to 78-87 (MRSRRWVYYC). A helical transmembrane segment spans residues 88–108 (LLNITLSDLLTGLAYVVNVLL). Residues 109–120 (SGTRTFQLSPVH) lie on the Extracellular side of the membrane. A helical transmembrane segment spans residues 121-141 (WFLREGLLFMALAASTFSLLF). Residues 142 to 163 (TAGERFATMVRVAESGATKTSR) are Cytoplasmic-facing. Residues 164–184 (VYGCIGLCWLLAAILGLLPLL) form a helical membrane-spanning segment. Residues 185–208 (GWNCVCAFPRCSSLLPLYSKGYVL) are Extracellular-facing. A helical transmembrane segment spans residues 209-229 (FCVVVFALILVAILSLYGAIF). Topologically, residues 230–254 (RVVRANGQKSPRPPARRKSRRLLNT) are cytoplasmic. The helical transmembrane segment at 255-275 (VLMILVAFVVCWGPLFGLLLA) threads the bilayer. The Extracellular portion of the chain corresponds to 276–290 (DIFGSNVWAQEYLRG). Residues 291-311 (MDWILALAVFNSAINPLIYSF) traverse the membrane as a helical segment. Topologically, residues 312-386 (RSREVQRAVL…LSSISSVRST (75 aa)) are cytoplasmic. The S-palmitoyl cysteine moiety is linked to residue Cys325.

It belongs to the G-protein coupled receptor 1 family. Specifically expressed in fetal and adult lymphoid and hematopoietic tissue. Expressed in lung, spleen, thymus and lymph node but absent in other non-lymphatic tissue. Coexpressed with GNA15 at the same relative levels in all tissues examined, with the highest levels in adult spleen and lung.

It is found in the cell membrane. Receptor for the lysosphingolipid sphingosine 1-phosphate (S1P). S1P is a bioactive lysophospholipid that elicits diverse physiological effect on most types of cells and tissues. May be involved in cell migration processes that are specific for lymphocytes. This is Sphingosine 1-phosphate receptor 4 (S1pr4) from Mus musculus (Mouse).